We begin with the raw amino-acid sequence, 109 residues long: Homeobox protein E60 (109 aa).

A disordered region spans residues 1 to 31; that stretch reads PRTRRVKRSDGRGNGGTPEEKRPRTAFSGEQ. The homeobox DNA-binding region spans 20-79; sequence EKRPRTAFSGEQLARLKREFAENRYLTERRRQQLSRDLGLNEAQIKIWFQNKRAKIKKAS.

It belongs to the engrailed homeobox family.

The protein localises to the nucleus. This Apis mellifera (Honeybee) protein is Homeobox protein E60.